Reading from the N-terminus, the 255-residue chain is Triosephosphate isomerase (255 aa).

10 to 12 (NWK) lines the substrate pocket. His96 serves as the catalytic Electrophile. Glu168 (proton acceptor) is an active-site residue. Residues Gly174, Ser213, and 234–235 (GG) each bind substrate.

The protein belongs to the triosephosphate isomerase family. In terms of assembly, homodimer.

Its subcellular location is the cytoplasm. The enzyme catalyses D-glyceraldehyde 3-phosphate = dihydroxyacetone phosphate. It functions in the pathway carbohydrate biosynthesis; gluconeogenesis. The protein operates within carbohydrate degradation; glycolysis; D-glyceraldehyde 3-phosphate from glycerone phosphate: step 1/1. In terms of biological role, involved in the gluconeogenesis. Catalyzes stereospecifically the conversion of dihydroxyacetone phosphate (DHAP) to D-glyceraldehyde-3-phosphate (G3P). This chain is Triosephosphate isomerase, found in Histophilus somni (strain 129Pt) (Haemophilus somnus).